Reading from the N-terminus, the 194-residue chain is dTTP/UTP pyrophosphatase (194 aa).

The active-site Proton acceptor is the aspartate 68.

Belongs to the Maf family. YhdE subfamily. It depends on a divalent metal cation as a cofactor.

It localises to the cytoplasm. It carries out the reaction dTTP + H2O = dTMP + diphosphate + H(+). The catalysed reaction is UTP + H2O = UMP + diphosphate + H(+). Functionally, nucleoside triphosphate pyrophosphatase that hydrolyzes dTTP and UTP. May have a dual role in cell division arrest and in preventing the incorporation of modified nucleotides into cellular nucleic acids. In Clostridioides difficile (strain 630) (Peptoclostridium difficile), this protein is dTTP/UTP pyrophosphatase.